A 3955-amino-acid polypeptide reads, in one-letter code: Nonribosomal peptide synthetase fmqA (3955 aa).

Residues 293-691 form an adenylation 1 region; that stretch reads SYSELETLSL…AQACCTIRNV (399 aa). Residues 806-879 enclose the Carrier 1 domain; that stretch reads THKETLIHQL…DLARLTDVVN (74 aa). O-(pantetheine 4'-phosphoryl)serine is present on serine 840. The condensation 1 stretch occupies residues 916–1187; that stretch reads QDIYPCTPLQ…IATVPLRVRL (272 aa). The adenylation 2 stretch occupies residues 1371–1766; sequence TYAELGELSD…DEVEKHVYQC (396 aa). Residues 1880-1956 form the Carrier 2 domain; the sequence is EPTSVAEREM…KIMSHESSLS (77 aa). At serine 1917 the chain carries O-(pantetheine 4'-phosphoryl)serine. An epimerase region spans residues 1970–2261; it reads FALSPIQQMF…FTTMWPVVAE (292 aa). Positions 2438–2724 are condensation 2; the sequence is EDIYPCSPSQ…FNPLPCRVHL (287 aa). The adenylation 3 stretch occupies residues 2906 to 3299; the sequence is TYGQLDELSS…GEVEANVQHC (394 aa). The Carrier 3 domain occupies 3422–3498; it reads APSTEEEKKL…DLAKVAVPKS (77 aa). Serine 3459 is modified (O-(pantetheine 4'-phosphoryl)serine). A condensation 3 region spans residues 3541–3805; the sequence is PGTQAQQFFI…CLNFIPLRVM (265 aa).

It belongs to the NRP synthetase family. As to quaternary structure, interacts with the mitogen-activated protein kinase mpkA.

It is found in the cytoplasmic vesicle. It functions in the pathway alkaloid biosynthesis. Functionally, nonribosomal peptide synthetase; part of the gene cluster that mediates the biosynthesis of the antitumor fumiquinazolines that confer a dual-usage capability to defend against phagocytes in the environment and animal hosts. The simplest member is fumiquinazoline F (FQF) with a 6-6-6 tricyclic core derived from anthranilic acid (Ant), tryptophan (Trp), and alanine (Ala). The trimodular NRPS fmqA is responsible for FQF formation. Modules 1, 2 and 3 of fmqA are predicted to activate and load Ant, Trp and Ala, respectively, providing for the assembly of an Ant-Trp-Ala-S-enzyme intermediate that would undergo double cyclization for chain release and generation of the tricyclic 6-6-6 product fumiquinazoline F. The presence of an E domain predicted for module 2 of fmqA is consistent with epimerization of L-Trp to D-Trp during assembly to generate the R-stereocenter at C14 of FQF. The FAD-dependent monooxygenase fmqB and the monomodular NRPS fmqC then maturate FQF to FQA. FmqB oxidizes the 2',3'-double bond of the indole side chain of FQF, and fmqC activates L-Ala as the adenylate, installs it as the pantetheinyl thioester on its carrier protein domain, and acylates the oxidized indole for subsequent intramolecular cyclization to create the 6-5-5-imidazolindolone of FQA. The FAD-linked oxidoreductase fmqD introduces a third layer of scaffold complexity by converting FQA to the spirohemiaminal FQC, presumably by catalyzing the formation of a transient imine within the pyrazinone ring. FQC subsequently converts nonenzymatically to the known cyclic aminal FQD. This chain is Nonribosomal peptide synthetase fmqA, found in Aspergillus fumigatus (strain ATCC MYA-4609 / CBS 101355 / FGSC A1100 / Af293) (Neosartorya fumigata).